Here is a 72-residue protein sequence, read N- to C-terminus: uncharacterized protein (72 aa).

Over Met1 to Val12 the chain is Cytoplasmic. A helical membrane pass occupies residues Ala13–Val32. The Lumenal portion of the chain corresponds to Thr33–Asn46. The chain crosses the membrane as a helical span at residues Phe47–Val69. At Ala70–Phe72 the chain is on the cytoplasmic side.

Belongs to the TPT transporter family. SLC35D subfamily.

The protein resides in the membrane. This is an uncharacterized protein from Saccharomyces cerevisiae (strain RM11-1a) (Baker's yeast).